Reading from the N-terminus, the 398-residue chain is Probable aminomethyltransferase (398 aa).

This sequence belongs to the GcvT family. The glycine cleavage system is composed of four proteins: P, T, L and H.

It catalyses the reaction N(6)-[(R)-S(8)-aminomethyldihydrolipoyl]-L-lysyl-[protein] + (6S)-5,6,7,8-tetrahydrofolate = N(6)-[(R)-dihydrolipoyl]-L-lysyl-[protein] + (6R)-5,10-methylene-5,6,7,8-tetrahydrofolate + NH4(+). The glycine cleavage system catalyzes the degradation of glycine. The protein is Probable aminomethyltransferase of Pyrococcus abyssi (strain GE5 / Orsay).